The following is a 343-amino-acid chain: Zinc finger protein STP3 (343 aa).

2 disordered regions span residues Y31–A56 and S71–K140. A compositionally biased stretch (polar residues) spans G33–P45. Low complexity-rich tracts occupy residues N46–A56, S71–S86, and S94–S120. S71 and S111 each carry phosphoserine. A C2H2-type zinc finger spans residues H169–H191. Residues S198–H222 form a disordered region.

It is found in the nucleus. The polypeptide is Zinc finger protein STP3 (STP3) (Saccharomyces cerevisiae (strain ATCC 204508 / S288c) (Baker's yeast)).